The sequence spans 162 residues: Caveolin-2 (162 aa).

Over 1–86 (MGLETEKADV…FEISKYVLYK (86 aa)) the chain is Cytoplasmic. Y19 is modified (phosphotyrosine; by SRC). Residues S20 and S23 each carry the phosphoserine modification. An intramembrane region (helical) is located at residues 87–107 (FLTVFLAIPLAFAAGVLFAVL). Over 108–162 (SCLHIWILMPFVKTCLMVLPSVQTIWRSVTDVVIAPLCASIGRSFSSVGLQLSHD) the chain is Cytoplasmic.

Belongs to the caveolin family. As to quaternary structure, monomer or homodimer. Interacts with CAV1; the interaction forms a stable heterooligomeric complex that is required for targeting to lipid rafts and for caveolae formation. Tyrosine phosphorylated forms do not form heterooligomers with the Tyr-19-phosphorylated form existing as a monomer or dimer. Interacts (tyrosine phosphorylated form) with the SH2 domain-containing proteins, RASA1, NCK1 and SRC. Interacts (tyrosine phosphorylated form) with INSR. Interacts (Tyr-19 phosphorylated form) with MAPK1 (phosphorylated form); the interaction, promoted by insulin, leads to nuclear location and MAPK1 activation. Interacts with STAT3; the interaction is increased on insulin-induced tyrosine phosphorylation leading to STAT activation. In terms of processing, phosphorylated on serine and tyrosine residues. CAV1 promotes phosphorylation on Ser-23 which then targets the complex to the plasma membrane, lipid rafts and caveolae. Phosphorylation on Tyr-19 is required for insulin-induced phosphorylation of MAPK1 and DNA binding of STAT3. Tyrosine phosphorylation is induced by both EGF and insulin.

It localises to the nucleus. It is found in the cytoplasm. The protein resides in the golgi apparatus membrane. The protein localises to the cell membrane. Its subcellular location is the membrane. It localises to the caveola. In terms of biological role, may act as a scaffolding protein within caveolar membranes. Interacts directly with G-protein alpha subunits and can functionally regulate their activity. Acts as an accessory protein in conjunction with CAV1 in targeting to lipid rafts and driving caveolae formation. Positive regulator of cellular mitogenesis of the MAPK signaling pathway. Required for the insulin-stimulated nuclear translocation and activation of MAPK1 and STAT3, and the subsequent regulation of cell cycle progression. In Oryctolagus cuniculus (Rabbit), this protein is Caveolin-2 (CAV2).